The sequence spans 202 residues: MENGFLFLDEMLHGVRWDAKYATWDNFTGKPVDGYEVNRIIGTKAVALALREAQIHAAALGYGLLLWDGYRPKSAVDCFLRWAAQPEDNLTKEKYYPNIERAELITKGYVASQSSHSRGSTIDLTLYHLDTGELVSMGSNFDFMDERSHHTAKGIGNAEAQNRRCLRKIMESSGFQSYRFEWWHYKLIDEPYPDTYFNFAVS.

Residues H116 and D123 each contribute to the Zn(2+) site. E181 functions as the Proton donor/acceptor in the catalytic mechanism. H184 contributes to the Zn(2+) binding site.

This sequence belongs to the peptidase M15D family. It depends on Zn(2+) as a cofactor.

It catalyses the reaction D-alanyl-D-alanine + H2O = 2 D-alanine. In terms of biological role, catalyzes hydrolysis of the D-alanyl-D-alanine dipeptide. The chain is D-alanyl-D-alanine dipeptidase (vanXB) from Enterococcus faecalis (strain ATCC 700802 / V583).